The primary structure comprises 208 residues: Small ribosomal subunit protein uS4 (208 aa).

An S4 RNA-binding domain is found at 97-160 (SRLDNIVFRL…KKNDKIAEAL (64 aa)).

The protein belongs to the universal ribosomal protein uS4 family. Part of the 30S ribosomal subunit. Contacts protein S5. The interaction surface between S4 and S5 is involved in control of translational fidelity.

In terms of biological role, one of the primary rRNA binding proteins, it binds directly to 16S rRNA where it nucleates assembly of the body of the 30S subunit. With S5 and S12 plays an important role in translational accuracy. This is Small ribosomal subunit protein uS4 from Mesoplasma florum (strain ATCC 33453 / NBRC 100688 / NCTC 11704 / L1) (Acholeplasma florum).